A 204-amino-acid polypeptide reads, in one-letter code: Recombination protein RecR (204 aa).

Residues 58 to 75 (CSVCQNITDLGVDPCHIC) form a C4-type zinc finger. The region spanning 83 to 181 (SVICVVESPT…NVTRIARGIP (99 aa)) is the Toprim domain.

The protein belongs to the RecR family.

May play a role in DNA repair. It seems to be involved in an RecBC-independent recombinational process of DNA repair. It may act with RecF and RecO. The protein is Recombination protein RecR of Chlorobaculum tepidum (strain ATCC 49652 / DSM 12025 / NBRC 103806 / TLS) (Chlorobium tepidum).